The primary structure comprises 338 residues: UDP-glucose 4-epimerase (338 aa).

NAD(+)-binding positions include 11–12 (YI), 31–36 (DNLCNS), 58–59 (DI), 80–84 (FAGLK), Asn-99, Ser-124, Tyr-149, Lys-153, and Phe-178. Residues Ser-124 and Tyr-149 each contribute to the substrate site. The Proton acceptor role is filled by Tyr-149. Substrate contacts are provided by residues Asn-179, 199–200 (NL), 216–218 (SVF), Arg-231, and 292–295 (RSGD).

It belongs to the NAD(P)-dependent epimerase/dehydratase family. As to quaternary structure, homodimer. It depends on NAD(+) as a cofactor.

The catalysed reaction is UDP-alpha-D-glucose = UDP-alpha-D-galactose. It functions in the pathway carbohydrate metabolism; galactose metabolism. In terms of biological role, involved in the metabolism of galactose. Catalyzes the conversion of UDP-galactose (UDP-Gal) to UDP-glucose (UDP-Glc) through a mechanism involving the transient reduction of NAD. By controlling the internal galactose concentration, it may be linked to the biosynthesis of lipopolysaccharide surface molecules, which are important for the pathogenesis of H.influenzae. This is UDP-glucose 4-epimerase (galE) from Haemophilus influenzae (strain ATCC 51907 / DSM 11121 / KW20 / Rd).